Consider the following 228-residue polypeptide: Serum amyloid P-component (228 aa).

The first 20 residues, 1 to 20 (MDKLLLWMSVFTSLLSEAFA), serve as a signal peptide directing secretion. Residues 25–224 (NQKVFVFPRE…YVVIKPRMWD (200 aa)) enclose the Pentraxin (PTX) domain. N-linked (GlcNAc...) asparagine glycosylation occurs at asparagine 52. Cysteine 56 and cysteine 115 are joined by a disulfide. Positions 78, 79, 156, 157, 158, and 168 each coordinate Ca(2+).

This sequence belongs to the pentraxin family. As to quaternary structure, homopentamer. Pentraxin (or pentaxin) have a discoid arrangement of 5 non-covalently bound subunits. Ca(2+) is required as a cofactor.

The protein resides in the secreted. The protein is Serum amyloid P-component (Apcs) of Rattus norvegicus (Rat).